The chain runs to 485 residues: Leukocyte receptor cluster member 9 (485 aa).

A C3H1-type zinc finger spans residues 8 to 35 (SEAPAVCRFFLEGRCRFGARCRQPHPGA). The interval 212–247 (ETRTGLDSSLETPEVDGPTKETGLNGTTELEMPDPS) is disordered.

The polypeptide is Leukocyte receptor cluster member 9 (Leng9) (Mus musculus (Mouse)).